A 173-amino-acid polypeptide reads, in one-letter code: Alpha-crystallin A chain (173 aa).

Position 1 is an N-acetylmethionine (Met-1). The required for complex formation with BFSP1 and BFSP2 stretch occupies residues Met-1–Glu-63. Gln-6 carries the deamidated glutamine; partial modification. Phosphoserine is present on Ser-45. Gln-50 carries the deamidated glutamine; partial modification. The region spanning Leu-52–Ser-162 is the sHSP domain. N6-acetyllysine occurs at positions 70 and 99. His-100 lines the Zn(2+) pocket. Asn-101 carries the post-translational modification Deamidated asparagine; partial. Zn(2+)-binding residues include Glu-102 and His-107. At Ser-122 the chain carries Phosphoserine. Asn-123 carries the post-translational modification Deamidated asparagine; partial. Residues Pro-144 to Ser-173 form a disordered region. Basic and acidic residues predominate over residues Gly-153–Pro-167. His-154 serves as a coordination point for Zn(2+). Ser-162 carries O-linked (GlcNAc) serine glycosylation.

Belongs to the small heat shock protein (HSP20) family. As to quaternary structure, heteromer composed of three CRYAA and one CRYAB subunits. Inter-subunit bridging via zinc ions enhances stability, which is crucial as there is no protein turn over in the lens. Can also form homodimers and homotetramers (dimers of dimers) which serve as the building blocks of homooligomers. Within homooligomers, the zinc-binding motif is created from residues of 3 different molecules. His-100 and Glu-102 from one molecule are ligands of the zinc ion, and His-107 and His-154 residues from additional molecules complete the site with tetrahedral coordination geometry. Part of a complex required for lens intermediate filament formation composed of BFSP1, BFSP2 and CRYAA. In terms of processing, acetylation at Lys-70 may increase chaperone activity. Post-translationally, undergoes age-dependent proteolytical cleavage at the C-terminus.

It is found in the cytoplasm. The protein resides in the nucleus. In terms of biological role, contributes to the transparency and refractive index of the lens. Acts as a chaperone, preventing aggregation of various proteins under a wide range of stress conditions. Required for the correct formation of lens intermediate filaments as part of a complex composed of BFSP1, BFSP2 and CRYAA. This Neovison vison (American mink) protein is Alpha-crystallin A chain (CRYAA).